We begin with the raw amino-acid sequence, 1290 residues long: Nonribosomal peptide synthetase 6 (1290 aa).

Residues 1–27 (MTAIDVPWLSTPRRDNSHGTRSNSSCQ) are disordered. The adenylation stretch occupies residues 260–657 (SYQELDCQAS…AQVEHHLRSC (398 aa)). The Carrier domain occupies 775–851 (APETELERKL…GLAQTHRHPV (77 aa)). S812 is modified (O-(pantetheine 4'-phosphoryl)serine). Positions 846 to 870 (THRHPVRRAEVPRSSHDPDPFGRVR) are disordered. A compositionally biased stretch (basic and acidic residues) spans 852-870 (RRAEVPRSSHDPDPFGRVR). The condensation stretch occupies residues 914–1162 (GGQLDPEQLR…PCMNIIPVRV (249 aa)).

It belongs to the NRP synthetase family.

In terms of biological role, nonribosomal peptide synthesis (NRPS) is a key mechanism responsible for the biosynthesis of bioactive metabolites which are potentially contributing to organismal virulence. This chain is Nonribosomal peptide synthetase 6 (NRPS6), found in Aspergillus fumigatus (strain ATCC MYA-4609 / CBS 101355 / FGSC A1100 / Af293) (Neosartorya fumigata).